A 197-amino-acid chain; its full sequence is dCTP deaminase, dUMP-forming (197 aa).

DCTP contacts are provided by residues 105 to 110 (RSSMGR), Asp123, 131 to 133 (TLE), Gln152, Tyr166, Lys174, and Gln178. Catalysis depends on Glu133, which acts as the Proton donor/acceptor.

Belongs to the dCTP deaminase family. Homotrimer.

It catalyses the reaction dCTP + 2 H2O = dUMP + NH4(+) + diphosphate. It functions in the pathway pyrimidine metabolism; dUMP biosynthesis; dUMP from dCTP: step 1/1. Bifunctional enzyme that catalyzes both the deamination of dCTP to dUTP and the hydrolysis of dUTP to dUMP without releasing the toxic dUTP intermediate. The sequence is that of dCTP deaminase, dUMP-forming from Methanosphaera stadtmanae (strain ATCC 43021 / DSM 3091 / JCM 11832 / MCB-3).